Here is a 155-residue protein sequence, read N- to C-terminus: SsrA-binding protein (155 aa).

Basic and acidic residues predominate over residues 132–147 (KRESIKRREQDRDIKR). Residues 132–155 (KRESIKRREQDRDIKRQMKQFNGR) are disordered.

This sequence belongs to the SmpB family.

The protein localises to the cytoplasm. Required for rescue of stalled ribosomes mediated by trans-translation. Binds to transfer-messenger RNA (tmRNA), required for stable association of tmRNA with ribosomes. tmRNA and SmpB together mimic tRNA shape, replacing the anticodon stem-loop with SmpB. tmRNA is encoded by the ssrA gene; the 2 termini fold to resemble tRNA(Ala) and it encodes a 'tag peptide', a short internal open reading frame. During trans-translation Ala-aminoacylated tmRNA acts like a tRNA, entering the A-site of stalled ribosomes, displacing the stalled mRNA. The ribosome then switches to translate the ORF on the tmRNA; the nascent peptide is terminated with the 'tag peptide' encoded by the tmRNA and targeted for degradation. The ribosome is freed to recommence translation, which seems to be the essential function of trans-translation. The chain is SsrA-binding protein from Streptococcus mutans serotype c (strain ATCC 700610 / UA159).